Consider the following 128-residue polypeptide: Probable 4-amino-4-deoxy-L-arabinose-phosphoundecaprenol flippase subunit ArnF (128 aa).

At 1-2 (MC) the chain is on the cytoplasmic side. The helical transmembrane segment at 3–23 (LIWGLFSVIIASVAQLSLGFA) threads the bilayer. Topologically, residues 24–35 (ASHLPPMTHLWD) are periplasmic. The helical transmembrane segment at 36–56 (FIAALLAFGLDARILLLGLLG) threads the bilayer. Over 57–76 (YLLSVFCWYKTLHKLALSKA) the chain is Cytoplasmic. A helical membrane pass occupies residues 77–97 (YALLSMSYVLVWIASMVLPGW). Residues 98–100 (EGT) are Periplasmic-facing. The helical transmembrane segment at 101–121 (FSLKALLGVACIMSGLMLIFL) threads the bilayer. Residues 122 to 128 (PTTKQRY) are Cytoplasmic-facing.

This sequence belongs to the ArnF family. Heterodimer of ArnE and ArnF.

Its subcellular location is the cell inner membrane. It participates in bacterial outer membrane biogenesis; lipopolysaccharide biosynthesis. Functionally, translocates 4-amino-4-deoxy-L-arabinose-phosphoundecaprenol (alpha-L-Ara4N-phosphoundecaprenol) from the cytoplasmic to the periplasmic side of the inner membrane. In Shigella flexneri, this protein is Probable 4-amino-4-deoxy-L-arabinose-phosphoundecaprenol flippase subunit ArnF.